The following is an 860-amino-acid chain: Nuclear cap-binding protein complex subunit 1 (860 aa).

In terms of domain architecture, MIF4G spans cysteine 36–aspartate 271.

It belongs to the NCBP1 family. As to quaternary structure, component of the nuclear cap-binding complex (CBC).

The protein localises to the nucleus. Component of the cap-binding complex (CBC) involved in the nuclear export of capped U snRNAs. The CBC complex is required for efficient pre-mRNA splicing through efficient commitment complex and spliceosome formation; and involved in rRNA processing at sites A0, A1 and A2. This is Nuclear cap-binding protein complex subunit 1 (CBC1) from Eremothecium gossypii (strain ATCC 10895 / CBS 109.51 / FGSC 9923 / NRRL Y-1056) (Yeast).